A 499-amino-acid polypeptide reads, in one-letter code: 3-octaprenyl-4-hydroxybenzoate carboxy-lyase (499 aa).

A Mn(2+)-binding site is contributed by Asn-173. Prenylated FMN contacts are provided by residues 176 to 178 (IYR), 190 to 192 (RWL), and 195 to 196 (RG). Glu-239 lines the Mn(2+) pocket. The Proton donor role is filled by Asp-288.

Belongs to the UbiD family. In terms of assembly, homohexamer. The cofactor is prenylated FMN. Mn(2+) serves as cofactor.

Its subcellular location is the cell membrane. It catalyses the reaction a 4-hydroxy-3-(all-trans-polyprenyl)benzoate + H(+) = a 2-(all-trans-polyprenyl)phenol + CO2. It participates in cofactor biosynthesis; ubiquinone biosynthesis. Its function is as follows. Catalyzes the decarboxylation of 3-octaprenyl-4-hydroxy benzoate to 2-octaprenylphenol, an intermediate step in ubiquinone biosynthesis. This chain is 3-octaprenyl-4-hydroxybenzoate carboxy-lyase, found in Blochmanniella floridana.